A 337-amino-acid chain; its full sequence is NADH-quinone oxidoreductase subunit H (337 aa).

The next 9 membrane-spanning stretches (helical) occupy residues glycine 9–valine 29, proline 50–phenylalanine 70, glycine 82–isoleucine 102, valine 115–glycine 135, isoleucine 161–valine 181, threonine 186–alanine 206, serine 245–isoleucine 265, valine 273–valine 293, and phenylalanine 313–isoleucine 333.

Belongs to the complex I subunit 1 family. As to quaternary structure, NDH-1 is composed of 14 different subunits. Subunits NuoA, H, J, K, L, M, N constitute the membrane sector of the complex.

It localises to the cell inner membrane. It carries out the reaction a quinone + NADH + 5 H(+)(in) = a quinol + NAD(+) + 4 H(+)(out). Functionally, NDH-1 shuttles electrons from NADH, via FMN and iron-sulfur (Fe-S) centers, to quinones in the respiratory chain. The immediate electron acceptor for the enzyme in this species is believed to be ubiquinone. Couples the redox reaction to proton translocation (for every two electrons transferred, four hydrogen ions are translocated across the cytoplasmic membrane), and thus conserves the redox energy in a proton gradient. This subunit may bind ubiquinone. The chain is NADH-quinone oxidoreductase subunit H from Parvibaculum lavamentivorans (strain DS-1 / DSM 13023 / NCIMB 13966).